A 128-amino-acid chain; its full sequence is Histone H2A.2 (128 aa).

Belongs to the histone H2A family. As to quaternary structure, the nucleosome is a histone octamer containing two molecules each of H2A, H2B, H3 and H4 assembled in one H3-H4 heterotetramer and two H2A-H2B heterodimers. The octamer wraps approximately 147 bp of DNA. In terms of tissue distribution, expressed in the generative cell within the bicellular pollen. Not detected in other reproductive or vegetative tissues.

It localises to the nucleus. The protein localises to the chromosome. Its function is as follows. Core component of nucleosome. Nucleosomes wrap and compact DNA into chromatin, limiting DNA accessibility to the cellular machineries which require DNA as a template. Histones thereby play a central role in transcription regulation, DNA repair, DNA replication and chromosomal stability. DNA accessibility is regulated via a complex set of post-translational modifications of histones, also called histone code, and nucleosome remodeling. May be involved in the repression of gene expression in male gametes. The chain is Histone H2A.2 (gH2A) from Lilium longiflorum (Trumpet lily).